The sequence spans 218 residues: Ribonuclease HII (218 aa).

The RNase H type-2 domain occupies 24–218; that stretch reads ESIAGVDEVG…KLFAVNGSLT (195 aa). Asp30, Glu31, and Asp126 together coordinate a divalent metal cation.

It belongs to the RNase HII family. It depends on Mn(2+) as a cofactor. The cofactor is Mg(2+).

Its subcellular location is the cytoplasm. The enzyme catalyses Endonucleolytic cleavage to 5'-phosphomonoester.. Functionally, endonuclease that specifically degrades the RNA of RNA-DNA hybrids. The chain is Ribonuclease HII from Prochlorococcus marinus (strain MIT 9313).